Here is a 554-residue protein sequence, read N- to C-terminus: Flavin-dependent halogenase ascD (554 aa).

3 residues coordinate FAD: glycine 15, glycine 18, and glutamate 48. Chloride-binding residues include serine 331 and glycine 332. An FAD-binding site is contributed by valine 333.

Belongs to the flavin-dependent halogenase family.

It carries out the reaction ilicicolin B + FADH2 + chloride + O2 = ilicicolin A + FAD + 2 H2O + H(+). It functions in the pathway secondary metabolite biosynthesis; terpenoid biosynthesis. Flavin-dependent halogenase; part of the asc-1 gene cluster that mediates the biosynthesis of both ascochlorin and ascofuranone, a strong inhibitor of cyanide-insensitive alternative oxidases and a promising drug candidate against African trypanosomiasis. The first step in the pathway is performed by the non-reducing polyketide synthase ascC that produces orsellinic acid by condensing acetyl-CoA with 3 malonyl-CoA units. Orsellinic acid is then prenylated by the prenyltransferase ascA to yield ilicicolinic acid B. Ilicicolinic acid B is further reduced to ilicicolin B by the reductase ascB. The halogenase ascD then chlorinates ilicicolin B to produce ilicicolin A which is converted to ilicicolin A epoxide by the cytochrome P450 monooxygenase ascE that catalyzes stereoselective epoxidation of the terminal double bond of the prenyl group. Ilicicolin A epoxide is the last common precursor for the biosynthesis of ascofuranone and ascochlorin. The terpene cyclase ascF produces a monocyclic terpene, and the cyclization reaction is proposed to be initiated by protonation of the terminal epoxide of ilicicolin A epoxide to generate a monocyclic tertiarycation, which is followed by a series of hydride and methyl shifts with abstraction of proton, leading to the formation of the (14S,15R,19R)-trimethylcyclohexanone ring structure of ilicicolin C, which is finally reduced to ascochlorin by the dehydrogenase ascG. On the other hand, ilicicolin A epoxide is hydroxylated by the cytochrome P450 monooxygenase ascH, and the resultant product is cyclized by the terpene cyclase ascI to ascofuranol via protonation-initiated epoxide ring opening, which facilitates the 6-endo-tet cyclization to form the tetrahy-drofuran ring. Finally, ascofuranol is oxidized into ascofuranone by ascJ. The chain is Flavin-dependent halogenase ascD from Acremonium egyptiacum (Oospora egyptiaca).